Consider the following 147-residue polypeptide: Hemoglobin subunit beta-2 (147 aa).

A Globin domain is found at Glu3–His147. Residues His64 and His93 each coordinate heme b.

This sequence belongs to the globin family. As to quaternary structure, hb 3 is a heterotetramer of two alpha-2 and two beta-2 chains. In terms of tissue distribution, red blood cells.

Involved in oxygen transport from gills to the various peripheral tissues. The protein is Hemoglobin subunit beta-2 (hbb2) of Arctogadus glacialis (Arctic cod).